The primary structure comprises 172 residues: Translationally-controlled tumor protein homolog (172 aa).

A TCTP domain is found at 1 to 172 (MIIYRDCISQ…FKDGLEIEKC (172 aa)). A Phosphoserine; by PLK1 modification is found at S46.

It belongs to the TCTP family.

The protein resides in the cytoplasm. Involved in calcium binding and microtubule stabilization. In Gallus gallus (Chicken), this protein is Translationally-controlled tumor protein homolog (TPT1).